We begin with the raw amino-acid sequence, 859 residues long: Envelope glycoprotein (859 aa).

Positions 1 to 6 (MVSIAF) are excised as a propeptide. The Extracellular segment spans residues 7 to 614 (YGGIPGGIST…KDLWSHIGNW (608 aa)). 14 N-linked (GlcNAc...) asparagine; by host glycosylation sites follow: Asn-40, Asn-112, Asn-141, Asn-148, Asn-186, Asn-214, Asn-233, Asn-244, Asn-313, Asn-340, Asn-368, Asn-399, Asn-406, and Asn-411. Residues 446–466 (FGISAIVAAIVAATAIAASAT) are fusion peptide. 2 N-linked (GlcNAc...) asparagine; by host glycosylation sites follow: Asn-483 and Asn-490. The interval 498 to 513 (LIERQIKILYAMILQT) is immunosuppression. N-linked (GlcNAc...) asparagine; by host glycosylation is found at Asn-550 and Asn-557. 2 coiled-coil regions span residues 576–624 (ILTT…SIIK) and 663–699 (KKFHHKHASREDTWDQAQHNIHLAGVTGGSGDKYYKQ). A helical transmembrane segment spans residues 615 to 635 (IPGLGASIIKYIVMFLLIYLL). Residues 636 to 859 (LTSSPKILRA…TSHVSMPQYV (224 aa)) are Cytoplasmic-facing.

As to quaternary structure, the mature envelope protein (Env) consists of a trimer of SU-TM heterodimers attached by noncovalent interactions or by a labile interchain disulfide bond. Specific enzymatic cleavages in vivo yield mature proteins. Envelope glycoproteins are synthesized as an inactive precursor that is N-glycosylated and processed likely by host cell furin or by a furin-like protease in the Golgi to yield the mature SU and TM proteins. The cleavage site between SU and TM requires the minimal sequence [KR]-X-[KR]-R.

Its subcellular location is the virion membrane. The protein resides in the host cell membrane. The surface protein (SU) attaches the virus to the host cell by binding to its receptor. This interaction triggers the refolding of the transmembrane protein (TM) and is thought to activate its fusogenic potential by unmasking its fusion peptide. Fusion occurs at the host cell plasma membrane. Its function is as follows. The transmembrane protein (TM) acts as a class I viral fusion protein. Under the current model, the protein has at least 3 conformational states: pre-fusion native state, pre-hairpin intermediate state, and post-fusion hairpin state. During viral and target cell membrane fusion, the coiled coil regions (heptad repeats) assume a trimer-of-hairpins structure, positioning the fusion peptide in close proximity to the C-terminal region of the ectodomain. The formation of this structure appears to drive apposition and subsequent fusion of viral and target cell membranes. Membranes fusion leads to delivery of the nucleocapsid into the cytoplasm. In Equus asinus (Donkey), this protein is Envelope glycoprotein (env).